The sequence spans 176 residues: Probable inosine/xanthosine triphosphatase (176 aa).

Asp-36 is a binding site for Mg(2+).

The protein belongs to the YjjX NTPase family. In terms of assembly, homodimer. Mg(2+) serves as cofactor. The cofactor is Mn(2+).

It catalyses the reaction XTP + H2O = XDP + phosphate + H(+). It carries out the reaction ITP + H2O = IDP + phosphate + H(+). In terms of biological role, phosphatase that hydrolyzes non-canonical purine nucleotides such as XTP and ITP to their respective diphosphate derivatives. Probably excludes non-canonical purines from DNA/RNA precursor pool, thus preventing their incorporation into DNA/RNA and avoiding chromosomal lesions. In Saccharolobus solfataricus (strain ATCC 35092 / DSM 1617 / JCM 11322 / P2) (Sulfolobus solfataricus), this protein is Probable inosine/xanthosine triphosphatase.